A 63-amino-acid chain; its full sequence is Protein CYSTEINE-RICH TRANSMEMBRANE MODULE 12 (63 aa).

The interval 1–34 (MQDMRDQNPPQGYPAAEQVSEQPGQDKKKKKPRF) is disordered. The helical transmembrane segment at 40–56 (KGDRGFIEGCLFALCCC) threads the bilayer.

Belongs to the CYSTM1 family. Homodimer and heterodimers. Binds weakly to CYSTM4, CYSTM6 and CYSTM7. In terms of tissue distribution, mostly expressed in roots, flowers and siliques and, to a lower extent, in stems and leaves.

The protein resides in the cell membrane. It localises to the cytoplasm. In terms of biological role, involved in resistance to abiotic stress. This Arabidopsis thaliana (Mouse-ear cress) protein is Protein CYSTEINE-RICH TRANSMEMBRANE MODULE 12.